Consider the following 201-residue polypeptide: Large ribosomal subunit protein uL4 (201 aa).

A disordered region spans residues 43–66; the sequence is TRAQKTRSEVSGGGKKPWRQKGTG.

Belongs to the universal ribosomal protein uL4 family. In terms of assembly, part of the 50S ribosomal subunit.

Its function is as follows. One of the primary rRNA binding proteins, this protein initially binds near the 5'-end of the 23S rRNA. It is important during the early stages of 50S assembly. It makes multiple contacts with different domains of the 23S rRNA in the assembled 50S subunit and ribosome. In terms of biological role, forms part of the polypeptide exit tunnel. In Tolumonas auensis (strain DSM 9187 / NBRC 110442 / TA 4), this protein is Large ribosomal subunit protein uL4.